We begin with the raw amino-acid sequence, 950 residues long: UvrABC system protein A (950 aa).

36–43 (GKSGSGKS) contacts ATP. A C4-type zinc finger spans residues 260–287 (CPLCGFSLPLIEPRLFSFNSPFGACSEC). ABC transporter domains lie at 317–599 (FKTS…KNSL) and 619–947 (ADKG…MFLK). Position 651–658 (651–658 (GVSGSGKS)) interacts with ATP. The C4-type zinc-finger motif lies at 750–776 (CEKCQGDGYLNIQMHFLPDVFVPCDLC).

This sequence belongs to the ABC transporter superfamily. UvrA family. As to quaternary structure, forms a heterotetramer with UvrB during the search for lesions.

Its subcellular location is the cytoplasm. Its function is as follows. The UvrABC repair system catalyzes the recognition and processing of DNA lesions. UvrA is an ATPase and a DNA-binding protein. A damage recognition complex composed of 2 UvrA and 2 UvrB subunits scans DNA for abnormalities. When the presence of a lesion has been verified by UvrB, the UvrA molecules dissociate. The chain is UvrABC system protein A from Borreliella burgdorferi (strain ATCC 35210 / DSM 4680 / CIP 102532 / B31) (Borrelia burgdorferi).